The following is a 515-amino-acid chain: Cytochrome P450 1A1 (515 aa).

Phe-225 lines the substrate pocket. Heme is bound at residue Cys-459.

This sequence belongs to the cytochrome P450 family. Requires heme as cofactor.

It localises to the endoplasmic reticulum membrane. The protein resides in the microsome membrane. The enzyme catalyses an organic molecule + reduced [NADPH--hemoprotein reductase] + O2 = an alcohol + oxidized [NADPH--hemoprotein reductase] + H2O + H(+). Functionally, cytochromes P450 are a group of heme-thiolate monooxygenases. They oxidize a variety of structurally unrelated compounds, including steroids, fatty acids, and xenobiotics. In Microgadus tomcod (Atlantic tomcod), this protein is Cytochrome P450 1A1 (cyp1a1).